A 402-amino-acid chain; its full sequence is Beta sliding clamp (402 aa).

The protein belongs to the beta sliding clamp family. Forms a ring-shaped head-to-tail homodimer around DNA which binds and tethers DNA polymerases and other proteins to the DNA. The DNA replisome complex has a single clamp-loading complex (3 tau and 1 each of delta, delta', psi and chi subunits) which binds 3 Pol III cores (1 core on the leading strand and 2 on the lagging strand) each with a beta sliding clamp dimer. Additional proteins in the replisome are other copies of gamma, psi and chi, Ssb, DNA helicase and RNA primase.

It localises to the cytoplasm. Its function is as follows. Confers DNA tethering and processivity to DNA polymerases and other proteins. Acts as a clamp, forming a ring around DNA (a reaction catalyzed by the clamp-loading complex) which diffuses in an ATP-independent manner freely and bidirectionally along dsDNA. Initially characterized for its ability to contact the catalytic subunit of DNA polymerase III (Pol III), a complex, multichain enzyme responsible for most of the replicative synthesis in bacteria; Pol III exhibits 3'-5' exonuclease proofreading activity. The beta chain is required for initiation of replication as well as for processivity of DNA replication. The protein is Beta sliding clamp (dnaN) of Mycobacterium bovis (strain ATCC BAA-935 / AF2122/97).